The sequence spans 545 residues: Labda-7,13-dienyl diphosphate synthase (545 aa).

Positions 315 to 320 (DADDTA) match the DXDDTA motif motif. An RXXDGSW motif motif is present at residues 444-450 (RRTDGSW). A disordered region spans residues 526–545 (LPAPAPVPPGFDAARTGPAD).

It belongs to the terpene synthase family. The cofactor is Mg(2+).

It catalyses the reaction (2E,6E,10E)-geranylgeranyl diphosphate = (13E)-labda-7,13-dien-15-yl diphosphate. Functionally, involved in the biosynthesis of the labdane-type bicyclic diterpene labda-7,13(16),14-triene. Catalyzes the conversion of geranylgeranyl diphosphate (GGDP) into labda-7,13(E)-dienyl diphosphate. This chain is Labda-7,13-dienyl diphosphate synthase, found in Streptomyces clavuligerus.